The sequence spans 387 residues: Phosphoglycerate kinase (387 aa).

Substrate-binding positions include 21-23 (DLN), R36, 59-62 (HLGR), R113, and R146. ATP contacts are provided by residues K197, E314, and 340 to 343 (GGDT).

It belongs to the phosphoglycerate kinase family. As to quaternary structure, monomer.

The protein resides in the cytoplasm. It carries out the reaction (2R)-3-phosphoglycerate + ATP = (2R)-3-phospho-glyceroyl phosphate + ADP. It functions in the pathway carbohydrate degradation; glycolysis; pyruvate from D-glyceraldehyde 3-phosphate: step 2/5. In Pseudomonas paraeruginosa (strain DSM 24068 / PA7) (Pseudomonas aeruginosa (strain PA7)), this protein is Phosphoglycerate kinase.